The primary structure comprises 315 residues: tRNA pseudouridine synthase B (315 aa).

Residue aspartate 54 is the Nucleophile of the active site.

It belongs to the pseudouridine synthase TruB family. Type 1 subfamily.

It catalyses the reaction uridine(55) in tRNA = pseudouridine(55) in tRNA. Responsible for synthesis of pseudouridine from uracil-55 in the psi GC loop of transfer RNAs. The chain is tRNA pseudouridine synthase B from Cupriavidus taiwanensis (strain DSM 17343 / BCRC 17206 / CCUG 44338 / CIP 107171 / LMG 19424 / R1) (Ralstonia taiwanensis (strain LMG 19424)).